The following is a 202-amino-acid chain: UPF0637 protein Exig_2520 (202 aa).

It belongs to the UPF0637 family.

The protein is UPF0637 protein Exig_2520 of Exiguobacterium sibiricum (strain DSM 17290 / CCUG 55495 / CIP 109462 / JCM 13490 / 255-15).